A 549-amino-acid polypeptide reads, in one-letter code: Cation/acetate symporter ActP (549 aa).

Helical transmembrane passes span 33–53 (WQAI…TYWA), 77–97 (LAIA…ALVF), 103–123 (GLIY…LIAE), 148–168 (ILSA…QMVG), 183–203 (IAVV…GMLA), 206–226 (WVQI…AFMV), 262–282 (ISAL…PHIL), 303–323 (GFMG…IMLV), 355–375 (LFLG…VAGL), 404–424 (VSKI…FLFE), 428–448 (IAFM…PIIL), 464–484 (GGWL…TIWV), and 493–513 (IFPY…GIWF).

It belongs to the sodium:solute symporter (SSF) (TC 2.A.21) family.

The protein localises to the cell inner membrane. Functionally, transports acetate. The polypeptide is Cation/acetate symporter ActP (Salmonella paratyphi C (strain RKS4594)).